The primary structure comprises 404 residues: Caspase-1 (404 aa).

One can recognise a CARD domain in the interval 1–91 (MADKVLKEKR…HLAGVLELST (91 aa)). A propeptide spanning residues 1–119 (MADKVLKEKR…PFPAPQTVQD (119 aa)) is cleaved from the precursor. Residues 111-132 (FPAPQTVQDNPVKPASSEPRGS) are disordered. Catalysis depends on residues H237 and C285. The propeptide occupies 298-316 (SVGPSGNSSLLAAEDFEYD). Residue S302 is modified to Phosphoserine.

It belongs to the peptidase C14A family. Heterotetramer that consists of two anti-parallel arranged heterodimers, each one formed by a 20 kDa (Caspase-1 subunit p20) and a 10 kDa (Caspase-1 subunit p10) subunit. May be a component of the inflammasome, a protein complex which also includes PYCARD, CARD8 and NLRP2 and whose function would be the activation of pro-inflammatory caspases. Component of the AIM2 PANoptosome complex, a multiprotein complex that drives inflammatory cell death (PANoptosis). Both the p10 and p20 subunits interact with MEFV. Interacts with CARD17P/INCA and CARD18. Interacts with SERPINB1; this interaction regulates CASP1 activity. As to quaternary structure, heterotetramer that consists of two anti-parallel arranged heterodimers, each one formed by a 20 kDa (Caspase-1 subunit p20) and a 10 kDa (Caspase-1 subunit p10) subunit. In terms of processing, the two subunits are derived from the precursor sequence by an autocatalytic mechanism. Post-translationally, ubiquitinated via 'Lys-11'-linked polyubiquitination. Deubiquitinated by USP8.

It is found in the cytoplasm. The protein resides in the cell membrane. The catalysed reaction is Strict requirement for an Asp residue at position P1 and has a preferred cleavage sequence of Tyr-Val-Ala-Asp-|-.. Its function is as follows. Thiol protease involved in a variety of inflammatory processes by proteolytically cleaving other proteins, such as the precursors of the inflammatory cytokines interleukin-1 beta (IL1B) and interleukin 18 (IL18) as well as the pyroptosis inducer Gasdermin-D (GSDMD), into active mature peptides. Plays a key role in cell immunity as an inflammatory response initiator: once activated through formation of an inflammasome complex, it initiates a pro-inflammatory response through the cleavage of the two inflammatory cytokines IL1B and IL18, releasing the mature cytokines which are involved in a variety of inflammatory processes. Cleaves a tetrapeptide after an Asp residue at position P1. Also initiates pyroptosis, a programmed lytic cell death pathway, through cleavage of GSDMD. In contrast to cleavage of interleukin IL1B, recognition and cleavage of GSDMD is not strictly dependent on the consensus cleavage site but depends on an exosite interface on CASP1 that recognizes and binds the Gasdermin-D, C-terminal (GSDMD-CT) part. Cleaves and activates CASP7 in response to bacterial infection, promoting plasma membrane repair. Upon inflammasome activation, during DNA virus infection but not RNA virus challenge, controls antiviral immunity through the cleavage of CGAS, rendering it inactive. In apoptotic cells, cleaves SPHK2 which is released from cells and remains enzymatically active extracellularly. The polypeptide is Caspase-1 (CASP1) (Sus scrofa (Pig)).